Here is a 226-residue protein sequence, read N- to C-terminus: Translation initiation factor IF-3 (226 aa).

Residues 195-226 are disordered; the sequence is FVPLAPLSPEDLIEEPELESESDSDAEPESDN. Positions 205–226 are enriched in acidic residues; it reads DLIEEPELESESDSDAEPESDN.

Belongs to the IF-3 family. In terms of assembly, monomer.

Its subcellular location is the cytoplasm. In terms of biological role, IF-3 binds to the 30S ribosomal subunit and shifts the equilibrium between 70S ribosomes and their 50S and 30S subunits in favor of the free subunits, thus enhancing the availability of 30S subunits on which protein synthesis initiation begins. This chain is Translation initiation factor IF-3, found in Chlorobium chlorochromatii (strain CaD3).